Consider the following 344-residue polypeptide: tRNA(Ile)-lysidine synthase (344 aa).

S43 to S48 serves as a coordination point for ATP.

The protein belongs to the tRNA(Ile)-lysidine synthase family.

Its subcellular location is the cytoplasm. The catalysed reaction is cytidine(34) in tRNA(Ile2) + L-lysine + ATP = lysidine(34) in tRNA(Ile2) + AMP + diphosphate + H(+). Its function is as follows. Ligates lysine onto the cytidine present at position 34 of the AUA codon-specific tRNA(Ile) that contains the anticodon CAU, in an ATP-dependent manner. Cytidine is converted to lysidine, thus changing the amino acid specificity of the tRNA from methionine to isoleucine. The protein is tRNA(Ile)-lysidine synthase of Bordetella parapertussis (strain 12822 / ATCC BAA-587 / NCTC 13253).